Here is a 128-residue protein sequence, read N- to C-terminus: Large ribosomal subunit protein bL12 (128 aa).

Belongs to the bacterial ribosomal protein bL12 family. As to quaternary structure, homodimer. Part of the ribosomal stalk of the 50S ribosomal subunit. Forms a multimeric L10(L12)X complex, where L10 forms an elongated spine to which 2 to 4 L12 dimers bind in a sequential fashion. Binds GTP-bound translation factors.

Functionally, forms part of the ribosomal stalk which helps the ribosome interact with GTP-bound translation factors. Is thus essential for accurate translation. This is Large ribosomal subunit protein bL12 from Corynebacterium aurimucosum (strain ATCC 700975 / DSM 44827 / CIP 107346 / CN-1) (Corynebacterium nigricans).